The chain runs to 207 residues: Large ribosomal subunit protein bL25 (207 aa).

Residues 171 to 207 (EEETVVTVSAPRAEEEPTTTEAPEPEAVHGKDEEPVE) form a disordered region. Positions 196–207 (EAVHGKDEEPVE) are enriched in basic and acidic residues.

It belongs to the bacterial ribosomal protein bL25 family. CTC subfamily. In terms of assembly, part of the 50S ribosomal subunit; part of the 5S rRNA/L5/L18/L25 subcomplex. Contacts the 5S rRNA. Binds to the 5S rRNA independently of L5 and L18.

Its function is as follows. This is one of the proteins that binds to the 5S RNA in the ribosome where it forms part of the central protuberance. The sequence is that of Large ribosomal subunit protein bL25 from Listeria monocytogenes serotype 4b (strain F2365).